The sequence spans 311 residues: Deacetoxycephalosporin C synthase (311 aa).

Residues 154–267 (DCEPLLRFRY…RTSSVFFLRP (114 aa)) enclose the Fe2OG dioxygenase domain.

Belongs to the iron/ascorbate-dependent oxidoreductase family. The cofactor is Fe cation. It depends on L-ascorbate as a cofactor.

The catalysed reaction is penicillin N + 2-oxoglutarate + O2 = deacetoxycephalosporin C + succinate + CO2 + H2O. It functions in the pathway antibiotic biosynthesis; cephalosporin C biosynthesis. In terms of biological role, catalyzes the step from penicillin N to deacetoxy-cephalosporin C. The polypeptide is Deacetoxycephalosporin C synthase (cefE) (Streptomyces clavuligerus).